Reading from the N-terminus, the 165-residue chain is Deoxyuridine 5'-triphosphate nucleotidohydrolase (165 aa).

It belongs to the dUTPase family. Homotrimer. Requires Mg(2+) as cofactor.

It is found in the host cytoplasm. It localises to the virion. It catalyses the reaction dUTP + H2O = dUMP + diphosphate + H(+). Functionally, the viral dUTPase may play a role in lowering the dUTP concentration in natural infections to minimize misincorporation of deoxyuridine into the viral DNA and ensure the fidelity of genome replication. In African swine fever virus (isolate Tick/South Africa/Pretoriuskop Pr4/1996) (ASFV), this protein is Deoxyuridine 5'-triphosphate nucleotidohydrolase.